The primary structure comprises 332 residues: Cytochrome c1, heme protein, mitochondrial (332 aa).

A mitochondrion-targeting transit peptide spans 1-70 (MLARTCLRST…YYHLYGFASA (70 aa)). At 71–277 (MTPAEEGLHA…AEPEMDDRKR (207 aa)) the chain is on the mitochondrial intermembrane side. A Cytochrome c domain is found at 97–250 (QALRRGFQVY…GLVDYEDGTP (154 aa)). The heme c site is built by Cys-110, Cys-113, and His-114. Acidic residues predominate over residues 139-151 (EENEYDTEPNDQG). The interval 139–162 (EENEYDTEPNDQGEIEKRPGKLSD) is disordered. Residue Met-234 coordinates heme c. The chain crosses the membrane as a helical span at residues 278–296 (MGMKVLVVTSVLFALSVYV). Residues 297–332 (KRYKWAWLKSRKIVYDPPKSPPPATNLALPQQRAKS) are Mitochondrial matrix-facing.

Belongs to the cytochrome c family. In terms of assembly, component of the ubiquinol-cytochrome c oxidoreductase (cytochrome b-c1 complex, complex III, CIII), a multisubunit enzyme composed of 10 subunits. The complex is composed of 3 respiratory subunits cytochrome b (cob), cytochrome c1 (cyt-1) and Rieske protein (fes-1), 2 core protein subunits pep and ucr-1, and 5 low-molecular weight protein subunits qcr6, qcr7, qcr8, qcr9 and probably NCU16844/qcr10. The complex exists as an obligatory dimer and forms supercomplexes (SCs) in the inner mitochondrial membrane with NADH-ubiquinone oxidoreductase (complex I, CI) and cytochrome c oxidase (complex IV, CIV), resulting in different assemblies (supercomplexes SCI(1)III(2), SCIII(2)IV(1) and SCIII(2)IV(2) as well as higher order I(x)III(y)IV(z) megacomplexes). It depends on heme c as a cofactor.

The protein localises to the mitochondrion inner membrane. The enzyme catalyses a quinol + 2 Fe(III)-[cytochrome c](out) = a quinone + 2 Fe(II)-[cytochrome c](out) + 2 H(+)(out). Component of the ubiquinol-cytochrome c oxidoreductase, a multisubunit transmembrane complex that is part of the mitochondrial electron transport chain which drives oxidative phosphorylation. The respiratory chain contains 3 multisubunit complexes succinate dehydrogenase (complex II, CII), ubiquinol-cytochrome c oxidoreductase (cytochrome b-c1 complex, complex III, CIII) and cytochrome c oxidase (complex IV, CIV), that cooperate to transfer electrons derived from NADH and succinate to molecular oxygen, creating an electrochemical gradient over the inner membrane that drives transmembrane transport and the ATP synthase. The cytochrome b-c1 complex catalyzes electron transfer from ubiquinol to cytochrome c, linking this redox reaction to translocation of protons across the mitochondrial inner membrane, with protons being carried across the membrane as hydrogens on the quinol. In the process called Q cycle, 2 protons are consumed from the matrix, 4 protons are released into the intermembrane space and 2 electrons are passed to cytochrome c. Cytochrome c1 is a catalytic core subunit containing a c-type heme. It transfers electrons from the [2Fe-2S] iron-sulfur cluster of the Rieske protein to cytochrome c. The chain is Cytochrome c1, heme protein, mitochondrial (cyt-1) from Neurospora crassa (strain ATCC 24698 / 74-OR23-1A / CBS 708.71 / DSM 1257 / FGSC 987).